Consider the following 1865-residue polypeptide: Dedicator of cytokinesis protein 1 (1865 aa).

An SH3 domain is found at 9–70 (REEKYGVAFY…PASYIHLKEA (62 aa)). The 185-residue stretch at 425–609 (RNDIYVTLVQ…DSFQISTLVC (185 aa)) folds into the C2 DOCK-type domain. A DOCKER domain is found at 1207–1617 (YKEIEREEMY…VEKEYGVRIM (411 aa)). 2 disordered regions span residues 1619–1716 (SSLD…EFKP) and 1732–1865 (TISP…GIVQ). Low complexity predominate over residues 1639–1666 (PSSSRPLSVASVSSLSSDSTPSRPGSDG). A compositionally biased stretch (basic and acidic residues) spans 1680 to 1694 (RSQDKLDKDDLEKEK). Ser1681 is subject to Phosphoserine. The interval 1687–1695 (KDDLEKEKK) is phosphoinositide-binding. A compositionally biased stretch (basic residues) spans 1695–1704 (KDKKKEKRNS). Basic and acidic residues predominate over residues 1705 to 1716 (KHQEIFEKEFKP). Ser1743, Ser1751, Ser1756, Ser1761, and Ser1764 each carry phosphoserine. The span at 1756–1766 (SVSPSSPSSQQ) shows a compositional bias: low complexity. 2 positions are modified to phosphothreonine: Thr1767 and Thr1772. The interaction with NCK2 second and third SH3 domain (minor) stretch occupies residues 1793–1819 (ADVADVPPPLPLKGSVADYGNLMENQD). The SH3-binding; interaction with CRK signature appears at 1799-1805 (PPPLPLK). The segment at 1820-1836 (LLGSPTPPPPPPHQRHL) is interaction with NCK2 third SH3 domain (major). Pro residues predominate over residues 1824–1851 (PTPPPPPPHQRHLPPPLPSKTPPPPPPK). The tract at residues 1837-1852 (PPPLPSKTPPPPPPKT) is interaction with NCK2 (minor). Positions 1838-1843 (PPLPSK) match the SH3-binding; interaction with CRK motif. The span at 1855-1865 (KQASVDSGIVQ) shows a compositional bias: polar residues. At Ser1858 the chain carries Phosphoserine.

This sequence belongs to the DOCK family. Interacts with the SH3 domains of CRK and NCK2 via multiple sites. Interacts with nucleotide-free RAC1 via its DOCKER domain. Interacts with ELMO1, ELMO2 and probably ELMO3 via its SH3 domain. Interacts with ADGRB1. Identified in a complex with AUTS2 and ELMO2. In terms of tissue distribution, highly expressed in placenta, lung, kidney, pancreas and ovary. Expressed at intermediate level in thymus, testes and colon.

The protein localises to the cytoplasm. The protein resides in the membrane. In terms of biological role, involved in cytoskeletal rearrangements required for phagocytosis of apoptotic cells and cell motility. Along with DOCK1, mediates CRK/CRKL regulation of epithelial and endothelial cell spreading and migration on type IV collagen. Functions as a guanine nucleotide exchange factor (GEF), which activates Rac Rho small GTPases by exchanging bound GDP for free GTP. Its GEF activity may be enhanced by ELMO1. This chain is Dedicator of cytokinesis protein 1 (DOCK1), found in Homo sapiens (Human).